Reading from the N-terminus, the 359-residue chain is AA9 family lytic polysaccharide monooxygenase C (359 aa).

The signal sequence occupies residues 1–16; that stretch reads MKTGSILAALVASASA. Residues histidine 17 and histidine 99 each contribute to the Cu(2+) site. 2 cysteine pairs are disulfide-bonded: cysteine 55–cysteine 185 and cysteine 155–cysteine 243. Residues histidine 171 and glutamine 180 each coordinate O2. Residue tyrosine 182 participates in Cu(2+) binding. Asparagine 189 and asparagine 284 each carry an N-linked (GlcNAc...) asparagine glycan. The interval 244-320 is disordered; that stretch reads PAGGSGGSSP…NPQPTNGGNS (77 aa). The segment covering 251–296 has biased composition (low complexity); it reads SSPAPATTASTPKPTSASAPKPVSTTASTPKPTNGSGSGTGAAHST. Over residues 307–319 the composition is skewed to polar residues; it reads TKASNPQPTNGGN. The CBM1 domain maps to 323-358; it reads RAAALYGQCGGKGWTGPTSCASGTCKFSNDWYSQCL.

The protein belongs to the polysaccharide monooxygenase AA9 family. It depends on Cu(2+) as a cofactor.

The protein resides in the secreted. It catalyses the reaction [(1-&gt;4)-beta-D-glucosyl]n+m + reduced acceptor + O2 = 4-dehydro-beta-D-glucosyl-[(1-&gt;4)-beta-D-glucosyl]n-1 + [(1-&gt;4)-beta-D-glucosyl]m + acceptor + H2O.. With respect to regulation, activity in inhibited by excessive amounts of H(2)O(2). Lytic polysaccharide monooxygenase (LPMO) that depolymerizes crystalline and amorphous polysaccharides via the oxidation of scissile alpha- or beta-(1-4)-glycosidic bonds, yielding C4 oxidation products. Catalysis by LPMOs requires the reduction of the active-site copper from Cu(II) to Cu(I) by a reducing agent and H(2)O(2) or O(2) as a cosubstrate. Degrades various hemicelluloses, in particular xyloglucan. Active on tamarind xyloglucan and konjac glucomannan. Acts on the glucose backbone of xyloglucan, accepting various substitutions (xylose, galactose) in almost allpositions. In contrast to all previously characterized LPMOs, which are active only on polysaccharides, is able to cleave soluble cello-oligosaccharides as short as a tetramer. The cello-oligosaccharide products released by this enzyme contain a C4 gemdiol/keto group at the non-reducing end. Binds to the inner wood cell wall layer and consumes enzymatically generated H(2)O(2). This chain is AA9 family lytic polysaccharide monooxygenase C (gh61-3), found in Neurospora crassa (strain ATCC 24698 / 74-OR23-1A / CBS 708.71 / DSM 1257 / FGSC 987).